Reading from the N-terminus, the 200-residue chain is Large ribosomal subunit protein bL9 (200 aa).

Belongs to the bacterial ribosomal protein bL9 family.

Functionally, binds to the 23S rRNA. The sequence is that of Large ribosomal subunit protein bL9 from Ruegeria pomeroyi (strain ATCC 700808 / DSM 15171 / DSS-3) (Silicibacter pomeroyi).